A 257-amino-acid polypeptide reads, in one-letter code: Probable septum site-determining protein MinC (257 aa).

Residues 123–141 (AVEAAAAPAAEPTPEPGAA) show a composition bias toward low complexity. Residues 123–144 (AVEAAAAPAAEPTPEPGAASQP) are disordered.

Belongs to the MinC family. Interacts with MinD and FtsZ.

Its function is as follows. Cell division inhibitor that blocks the formation of polar Z ring septums. Rapidly oscillates between the poles of the cell to destabilize FtsZ filaments that have formed before they mature into polar Z rings. Prevents FtsZ polymerization. This Burkholderia multivorans (strain ATCC 17616 / 249) protein is Probable septum site-determining protein MinC.